The sequence spans 515 residues: Fc receptor-like protein 4 (515 aa).

Residues 1–19 form the signal peptide; that stretch reads MLLWASLLAFAPVCGQSAA. Residues 20-387 lie on the Extracellular side of the membrane; that stretch reads AHKPVISVHP…RETPGNRDGL (368 aa). Ig-like C2-type domains are found at residues 23 to 97, 102 to 183, 193 to 271, and 275 to 374; these read PVIS…NPVR, SDSL…NFKI, PELK…GNIH, and PSLQ…MVLN. 4 disulfides stabilise this stretch: C44–C85, C123–C167, C212–C261, and C310–C359. An N-linked (GlcNAc...) asparagine glycan is attached at N374. Residues 388–408 form a helical membrane-spanning segment; sequence VAAGATGGLLSALLLAVALLF. Residues 409–515 are Cytoplasmic-facing; sequence HCWRRRKSGV…GKISSKDEES (107 aa). 3 short sequence motifs (ITIM motif) span residues 449–454, 461–466, and 491–496; these read SLYVDV, LVYSEI, and VVYSEV. The disordered stretch occupies residues 494-515; the sequence is SEVKTQHPDNSAGKISSKDEES.

Interacts with PTPN6 and PTPN11. Post-translationally, phosphorylated on cytoplasmic tyrosines upon activation. In terms of tissue distribution, specifically expressed by memory and monocytoid B-cells which populate spleen and lymph nodes. Preferentially expressed in memory B-cells associated with mucosal tissue (at protein level).

The protein resides in the cell membrane. In terms of biological role, may function as an inhibitor of the B-cell receptor signaling. May function in the B-cell-mediated immune response. This chain is Fc receptor-like protein 4 (FCRL4), found in Homo sapiens (Human).